The sequence spans 286 residues: 33 kDa chaperonin (286 aa).

2 disulfide bridges follow: Cys-233/Cys-235 and Cys-267/Cys-270.

Belongs to the HSP33 family. Under oxidizing conditions two disulfide bonds are formed involving the reactive cysteines. Under reducing conditions zinc is bound to the reactive cysteines and the protein is inactive.

It localises to the cytoplasm. In terms of biological role, redox regulated molecular chaperone. Protects both thermally unfolding and oxidatively damaged proteins from irreversible aggregation. Plays an important role in the bacterial defense system toward oxidative stress. The protein is 33 kDa chaperonin of Histophilus somni (strain 2336) (Haemophilus somnus).